The chain runs to 367 residues: Cyclin-D3-2 (367 aa).

Over residues 324–335 (STTASVSSSSSS) the composition is skewed to low complexity. The segment at 324 to 347 (STTASVSSSSSSPEPLLKRRRVQE) is disordered.

It belongs to the cyclin family. Cyclin D subfamily. Interacts with CDKA-1. Expressed in developing vegetative and floral primordia.

Promotes divisions in the guard cells (GCs) after the guard mother cells (GMC) symmetric division when in the presence of CDKA-1. In Arabidopsis thaliana (Mouse-ear cress), this protein is Cyclin-D3-2 (CYCD3-2).